A 294-amino-acid polypeptide reads, in one-letter code: Glycine--tRNA ligase alpha subunit (294 aa).

Belongs to the class-II aminoacyl-tRNA synthetase family. In terms of assembly, tetramer of two alpha and two beta subunits.

It localises to the cytoplasm. It catalyses the reaction tRNA(Gly) + glycine + ATP = glycyl-tRNA(Gly) + AMP + diphosphate. The sequence is that of Glycine--tRNA ligase alpha subunit from Trichormus variabilis (strain ATCC 29413 / PCC 7937) (Anabaena variabilis).